We begin with the raw amino-acid sequence, 689 residues long: 1,4-alpha-glucan-branching enzyme (689 aa).

(1,4-alpha-D-glucosyl)n contacts are provided by Trp93 and Lys128. Catalysis depends on Asp345, which acts as the Nucleophile. Glu400 acts as the Proton donor in catalysis.

Belongs to the glycosyl hydrolase 13 family. GlgB subfamily.

The protein resides in the cytoplasm. The catalysed reaction is Transfers a segment of a (1-&gt;4)-alpha-D-glucan chain to a primary hydroxy group in a similar glucan chain.. Its pathway is glycan biosynthesis; glycogen biosynthesis. Its function is as follows. Glycogen-branching enzyme participates in the glycogen biosynthetic process along with glycogenin and glycogen synthase. Generates alpha-1,6-glucosidic branches from alpha-1,4-linked glucose chains, to increase solubility of the glycogen polymer. This chain is 1,4-alpha-glucan-branching enzyme (gbeA), found in Aspergillus oryzae (strain ATCC 42149 / RIB 40) (Yellow koji mold).